The sequence spans 553 residues: General alpha-glucoside permease (553 aa).

Polar residues predominate over residues methionine 1 to serine 21. Residues methionine 1–glutamate 26 are disordered. At methionine 1–serine 33 the chain is on the cytoplasmic side. Residues leucine 34 to leucine 54 traverse the membrane as a helical segment. Residues glycine 55–serine 72 lie on the Extracellular side of the membrane. Residues isoleucine 73–serine 93 traverse the membrane as a helical segment. The Cytoplasmic segment spans residues aspartate 94 to serine 111. The helical transmembrane segment at leucine 112–phenylalanine 132 threads the bilayer. At serine 133–arginine 140 the chain is on the extracellular side. The chain crosses the membrane as a helical span at residues valine 141–methionine 161. Over alanine 162 to arginine 186 the chain is Cytoplasmic. The chain crosses the membrane as a helical span at residues methionine 187–phenylalanine 207. At serine 208–glutamine 216 the chain is on the extracellular side. A helical membrane pass occupies residues valine 217–valine 237. Over serine 238–glutamine 280 the chain is Cytoplasmic. The chain crosses the membrane as a helical span at residues phenylalanine 281–leucine 301. Over tyrosine 302–serine 322 the chain is Extracellular. The helical transmembrane segment at phenylalanine 323–leucine 343 threads the bilayer. Residues glutamate 344–leucine 424 are Cytoplasmic-facing. The tract at residues asparagine 368 to arginine 399 is disordered. The segment covering arginine 374–arginine 392 has biased composition (polar residues). A helical transmembrane segment spans residues proline 425–leucine 445. Residues glutamine 446–glutamine 452 lie on the Extracellular side of the membrane. A helical membrane pass occupies residues alanine 453–phenylalanine 473. Residues serine 474 to asparagine 494 are Cytoplasmic-facing. A helical membrane pass occupies residues valine 495–serine 515. The Extracellular portion of the chain corresponds to glutamate 516–aspartate 521. Residues isoleucine 522–alanine 542 form a helical membrane-spanning segment. The Cytoplasmic segment spans residues tyrosine 543–phenylalanine 553.

The protein belongs to the glycoside-pentoside-hexuronide (GPH) cation symporter transporter (TC 2.A.2.4) family.

It is found in the membrane. Functionally, responsible for the transport of maltose and sucrose into the cell, with the concomitant uptake of protons (symport system). This is General alpha-glucoside permease (sut1) from Schizosaccharomyces pombe (strain 972 / ATCC 24843) (Fission yeast).